The following is a 371-amino-acid chain: Carnitine monooxygenase oxygenase subunit (371 aa).

Residues 44–152 (WICVAHSSEL…VEEYAGFLFI (109 aa)) form the Rieske domain. The [2Fe-2S] cluster site is built by cysteine 86, histidine 88, cysteine 106, and histidine 109. Fe cation-binding residues include histidine 208, histidine 213, and aspartate 323.

It belongs to the bacterial ring-hydroxylating dioxygenase alpha subunit family. CntA subfamily. In terms of assembly, composed of an oxygenase subunit (cntA) and a reductase subunit (cntB). It depends on [2Fe-2S] cluster as a cofactor. Fe cation is required as a cofactor.

It catalyses the reaction (R)-carnitine + NADH + O2 + H(+) = (3R)-3-hydroxy-4-oxobutanoate + trimethylamine + NAD(+) + H2O. The enzyme catalyses (R)-carnitine + NADPH + O2 + H(+) = (3R)-3-hydroxy-4-oxobutanoate + trimethylamine + NADP(+) + H2O. Its pathway is amine and polyamine metabolism; carnitine metabolism. Its function is as follows. Converts carnitine to trimethylamine and malic semialdehyde. The sequence is that of Carnitine monooxygenase oxygenase subunit from Acinetobacter baumannii (strain ATCC 19606 / DSM 30007 / JCM 6841 / CCUG 19606 / CIP 70.34 / NBRC 109757 / NCIMB 12457 / NCTC 12156 / 81).